The primary structure comprises 174 residues: ATP-dependent protease subunit HslV (174 aa).

Residue T2 is part of the active site. Residues G159, D162, and T165 each coordinate Na(+).

Belongs to the peptidase T1B family. HslV subfamily. A double ring-shaped homohexamer of HslV is capped on each side by a ring-shaped HslU homohexamer. The assembly of the HslU/HslV complex is dependent on binding of ATP.

It localises to the cytoplasm. It carries out the reaction ATP-dependent cleavage of peptide bonds with broad specificity.. Its activity is regulated as follows. Allosterically activated by HslU binding. Its function is as follows. Protease subunit of a proteasome-like degradation complex believed to be a general protein degrading machinery. The polypeptide is ATP-dependent protease subunit HslV (Lacticaseibacillus casei (strain BL23) (Lactobacillus casei)).